Reading from the N-terminus, the 75-residue chain is Putative snRNP Sm-like protein (75 aa).

Positions 4–75 constitute a Sm domain; sequence RPLDVIHRSL…NVLAISPTEE (72 aa).

It belongs to the snRNP Sm proteins family.

The chain is Putative snRNP Sm-like protein from Pyrococcus horikoshii (strain ATCC 700860 / DSM 12428 / JCM 9974 / NBRC 100139 / OT-3).